The following is a 354-amino-acid chain: S-adenosylmethionine:tRNA ribosyltransferase-isomerase (354 aa).

It belongs to the QueA family. Monomer.

Its subcellular location is the cytoplasm. It carries out the reaction 7-aminomethyl-7-carbaguanosine(34) in tRNA + S-adenosyl-L-methionine = epoxyqueuosine(34) in tRNA + adenine + L-methionine + 2 H(+). It functions in the pathway tRNA modification; tRNA-queuosine biosynthesis. In terms of biological role, transfers and isomerizes the ribose moiety from AdoMet to the 7-aminomethyl group of 7-deazaguanine (preQ1-tRNA) to give epoxyqueuosine (oQ-tRNA). The sequence is that of S-adenosylmethionine:tRNA ribosyltransferase-isomerase from Salmonella paratyphi A (strain ATCC 9150 / SARB42).